We begin with the raw amino-acid sequence, 470 residues long: Glutamate--tRNA ligase 2 (470 aa).

Positions Pro10 to Ser20 match the 'HIGH' region motif. A 'KMSKS' region motif is present at residues Lys239–Arg243. Lys242 serves as a coordination point for ATP.

The protein belongs to the class-I aminoacyl-tRNA synthetase family. Glutamate--tRNA ligase type 1 subfamily. Monomer.

The protein resides in the cytoplasm. It catalyses the reaction tRNA(Glu) + L-glutamate + ATP = L-glutamyl-tRNA(Glu) + AMP + diphosphate. Catalyzes the attachment of glutamate to tRNA(Glu) in a two-step reaction: glutamate is first activated by ATP to form Glu-AMP and then transferred to the acceptor end of tRNA(Glu). The protein is Glutamate--tRNA ligase 2 of Rickettsia prowazekii (strain Madrid E).